The primary structure comprises 878 residues: Alanine--tRNA ligase (878 aa).

Residues His567, His571, Cys669, and His673 each coordinate Zn(2+).

It belongs to the class-II aminoacyl-tRNA synthetase family. It depends on Zn(2+) as a cofactor.

It localises to the cytoplasm. The enzyme catalyses tRNA(Ala) + L-alanine + ATP = L-alanyl-tRNA(Ala) + AMP + diphosphate. Catalyzes the attachment of alanine to tRNA(Ala) in a two-step reaction: alanine is first activated by ATP to form Ala-AMP and then transferred to the acceptor end of tRNA(Ala). Also edits incorrectly charged Ser-tRNA(Ala) and Gly-tRNA(Ala) via its editing domain. The chain is Alanine--tRNA ligase from Rickettsia akari (strain Hartford).